A 30-amino-acid polypeptide reads, in one-letter code: Cyclotide hyen-G (30 aa).

The segment at residues 1–30 (GLPCGESCVYIPCISTVLGCSCSNKVCYRD) is a cross-link (cyclopeptide (Gly-Asp)). 3 cysteine pairs are disulfide-bonded: cysteine 4/cysteine 20, cysteine 8/cysteine 22, and cysteine 13/cysteine 27.

This is a cyclic peptide. As to expression, detected in stems (at protein level).

Its function is as follows. Probably participates in a plant defense mechanism. This Pigea enneasperma (Spade flower) protein is Cyclotide hyen-G.